The chain runs to 454 residues: Aminodeoxychorismate synthase component 1 (454 aa).

L-tryptophan is bound by residues serine 37, 44-47 (YNRF), and 241-243 (PFS). The active-site Proton donor is the glutamate 259. Residue lysine 275 is the N6-(4-deoxychorismate)-lysine intermediate of the active site.

The protein belongs to the anthranilate synthase component I family. In terms of assembly, monomer. Heterodimer consisting of two non-identical subunits: a glutamine amidotransferase subunit (PabA) and a aminodeoxychorismate synthase subunit (PabB). Requires Mg(2+) as cofactor.

It carries out the reaction chorismate + L-glutamine = 4-amino-4-deoxychorismate + L-glutamate. It functions in the pathway cofactor biosynthesis; tetrahydrofolate biosynthesis; 4-aminobenzoate from chorismate: step 1/2. Part of a heterodimeric complex that catalyzes the two-step biosynthesis of 4-amino-4-deoxychorismate (ADC), a precursor of p-aminobenzoate (PABA) and tetrahydrofolate. In the first step, a glutamine amidotransferase (PabA) generates ammonia as a substrate that, along with chorismate, is used in the second step, catalyzed by aminodeoxychorismate synthase (PabB) to produce ADC. This Salmonella typhimurium (strain LT2 / SGSC1412 / ATCC 700720) protein is Aminodeoxychorismate synthase component 1 (pabB).